We begin with the raw amino-acid sequence, 100 residues long: Urease subunit gamma (100 aa).

Belongs to the urease gamma subunit family. Heterotrimer of UreA (gamma), UreB (beta) and UreC (alpha) subunits. Three heterotrimers associate to form the active enzyme.

The protein resides in the cytoplasm. The catalysed reaction is urea + 2 H2O + H(+) = hydrogencarbonate + 2 NH4(+). The protein operates within nitrogen metabolism; urea degradation; CO(2) and NH(3) from urea (urease route): step 1/1. The sequence is that of Urease subunit gamma from Azoarcus sp. (strain BH72).